Here is a 193-residue protein sequence, read N- to C-terminus: GTP cyclohydrolase 1 (193 aa).

Positions 73, 76, and 144 each coordinate Zn(2+).

The protein belongs to the GTP cyclohydrolase I family. In terms of assembly, homomer.

It catalyses the reaction GTP + H2O = 7,8-dihydroneopterin 3'-triphosphate + formate + H(+). It functions in the pathway cofactor biosynthesis; 7,8-dihydroneopterin triphosphate biosynthesis; 7,8-dihydroneopterin triphosphate from GTP: step 1/1. The chain is GTP cyclohydrolase 1 from Hyperthermus butylicus (strain DSM 5456 / JCM 9403 / PLM1-5).